We begin with the raw amino-acid sequence, 777 residues long: Phosphoribosylformylglycinamidine synthase subunit PurL (777 aa).

Residue His-50 is part of the active site. ATP-binding residues include Tyr-53 and Lys-92. Glu-94 is a Mg(2+) binding site. Substrate-binding positions include 95-98 (SHNH) and Arg-117. The active-site Proton acceptor is the His-96. Residue Asp-118 coordinates Mg(2+). Residue Gln-241 coordinates substrate. Residue Asp-269 coordinates Mg(2+). Residue 313–315 (ESQ) participates in substrate binding. 2 residues coordinate ATP: Asp-516 and Gly-553. Residue Asn-554 participates in Mg(2+) binding. Ser-556 lines the substrate pocket.

This sequence belongs to the FGAMS family. As to quaternary structure, monomer. Part of the FGAM synthase complex composed of 1 PurL, 1 PurQ and 2 PurS subunits.

The protein resides in the cytoplasm. The catalysed reaction is N(2)-formyl-N(1)-(5-phospho-beta-D-ribosyl)glycinamide + L-glutamine + ATP + H2O = 2-formamido-N(1)-(5-O-phospho-beta-D-ribosyl)acetamidine + L-glutamate + ADP + phosphate + H(+). It participates in purine metabolism; IMP biosynthesis via de novo pathway; 5-amino-1-(5-phospho-D-ribosyl)imidazole from N(2)-formyl-N(1)-(5-phospho-D-ribosyl)glycinamide: step 1/2. Part of the phosphoribosylformylglycinamidine synthase complex involved in the purines biosynthetic pathway. Catalyzes the ATP-dependent conversion of formylglycinamide ribonucleotide (FGAR) and glutamine to yield formylglycinamidine ribonucleotide (FGAM) and glutamate. The FGAM synthase complex is composed of three subunits. PurQ produces an ammonia molecule by converting glutamine to glutamate. PurL transfers the ammonia molecule to FGAR to form FGAM in an ATP-dependent manner. PurS interacts with PurQ and PurL and is thought to assist in the transfer of the ammonia molecule from PurQ to PurL. The chain is Phosphoribosylformylglycinamidine synthase subunit PurL from Synechococcus elongatus (strain ATCC 33912 / PCC 7942 / FACHB-805) (Anacystis nidulans R2).